The chain runs to 149 residues: Calmodulin (149 aa).

Ala2 is modified (N-acetylalanine). 4 EF-hand domains span residues 8–43 (EQIA…LGQN), 44–79 (PTEA…KMKD), 81–116 (DSEE…LGEK), and 117–149 (LTDE…MTNK). Asp21, Asp23, Asp25, Thr27, Glu32, Asp57, Asp59, Asn61, Thr63, Glu68, Asp94, Asp96, Asn98, and Glu105 together coordinate Ca(2+). Lys116 is subject to N6,N6,N6-trimethyllysine. Ca(2+) is bound by residues Asp130, Asp132, Asp134, Gln136, and Glu141.

Belongs to the calmodulin family.

Its function is as follows. Calmodulin mediates the control of a large number of enzymes, ion channels and other proteins by Ca(2+). Among the enzymes to be stimulated by the calmodulin-Ca(2+) complex are a number of protein kinases and phosphatases. The sequence is that of Calmodulin from Ciona intestinalis (Transparent sea squirt).